Reading from the N-terminus, the 307-residue chain is tRNA pseudouridine synthase B (307 aa).

The Nucleophile role is filled by aspartate 38.

The protein belongs to the pseudouridine synthase TruB family. Type 1 subfamily.

It catalyses the reaction uridine(55) in tRNA = pseudouridine(55) in tRNA. Its function is as follows. Responsible for synthesis of pseudouridine from uracil-55 in the psi GC loop of transfer RNAs. In Bacillus cereus (strain ZK / E33L), this protein is tRNA pseudouridine synthase B.